A 35-amino-acid polypeptide reads, in one-letter code: Mu-theraphotoxin-Hhn1a (35 aa).

3 cysteine pairs are disulfide-bonded: C2–C17, C9–C24, and C16–C31.

The protein belongs to the neurotoxin 10 (Hwtx-1) family. 22 (Htx-4) subfamily. In terms of assembly, monomer. In terms of tissue distribution, expressed by the venom gland.

It is found in the secreted. Functionally, inhibits selectively tetrodotoxin-sensitive voltage-gated sodium channels (Nav). Does not act by binding to receptor site 3 to slow the inactivation kinetics of sodium currents. The polypeptide is Mu-theraphotoxin-Hhn1a (Cyriopagopus hainanus (Chinese bird spider)).